Reading from the N-terminus, the 79-residue chain is Succinate dehydrogenase assembly factor 1, mitochondrial (79 aa).

The protein belongs to the complex I LYR family. SDHAF1 subfamily. As to quaternary structure, interacts with SDH2 within an SDH1-SDH2 subcomplex.

The protein localises to the mitochondrion matrix. Its function is as follows. Plays an essential role in the assembly of succinate dehydrogenase (SDH), an enzyme complex (also referred to as respiratory complex II) that is a component of both the tricarboxylic acid (TCA) cycle and the mitochondrial electron transport chain, and which couples the oxidation of succinate to fumarate with the reduction of ubiquinone (coenzyme Q) to ubiquinol. Promotes maturation of the iron-sulfur protein subunit SDH2 of the SDH catalytic dimer, protecting it from the deleterious effects of oxidants. Acts together with SDHAF3 (SDH7). This chain is Succinate dehydrogenase assembly factor 1, mitochondrial, found in Saccharomyces cerevisiae (strain YJM789) (Baker's yeast).